Here is a 272-residue protein sequence, read N- to C-terminus: Dihydropteroate synthase (272 aa).

Residues 1-256 (MIKTKIMGIL…NVLLNTRLAQ (256 aa)) form the Pterin-binding domain. Residue Asn-11 participates in Mg(2+) binding. Residues Thr-51, Asp-89, Asn-108, Asp-172, Lys-208, and 244 to 246 (RVH) contribute to the (7,8-dihydropterin-6-yl)methyl diphosphate site.

The protein belongs to the DHPS family. Homodimer. Mg(2+) is required as a cofactor.

The catalysed reaction is (7,8-dihydropterin-6-yl)methyl diphosphate + 4-aminobenzoate = 7,8-dihydropteroate + diphosphate. Its pathway is cofactor biosynthesis; tetrahydrofolate biosynthesis; 7,8-dihydrofolate from 2-amino-4-hydroxy-6-hydroxymethyl-7,8-dihydropteridine diphosphate and 4-aminobenzoate: step 1/2. In terms of biological role, catalyzes the condensation of para-aminobenzoate (pABA) with 6-hydroxymethyl-7,8-dihydropterin diphosphate (DHPt-PP) to form 7,8-dihydropteroate (H2Pte), the immediate precursor of folate derivatives. This Staphylococcus epidermidis (strain ATCC 12228 / FDA PCI 1200) protein is Dihydropteroate synthase (folP).